The sequence spans 499 residues: Maturase K (499 aa).

This sequence belongs to the intron maturase 2 family. MatK subfamily.

It localises to the plastid. The protein localises to the chloroplast. Its function is as follows. Usually encoded in the trnK tRNA gene intron. Probably assists in splicing its own and other chloroplast group II introns. This chain is Maturase K, found in Gymnocladus dioicus (Kentucky coffee tree).